We begin with the raw amino-acid sequence, 131 residues long: MRHRKSGRQLNRNSSHRQAMFRNMASSLVRHEIIKTTAVKAKELRRVVEPLITLAKSDSVANRRLAFARTRDQEVVGKLFNELGPRYQERPGGYTRILKCGLRAGDKAPMAYIELVGRPEAAQAVEVEAAE.

This sequence belongs to the bacterial ribosomal protein bL17 family. In terms of assembly, part of the 50S ribosomal subunit. Contacts protein L32.

The protein is Large ribosomal subunit protein bL17 of Shewanella amazonensis (strain ATCC BAA-1098 / SB2B).